The chain runs to 128 residues: Small ribosomal subunit protein bS6 (128 aa).

This sequence belongs to the bacterial ribosomal protein bS6 family.

Binds together with bS18 to 16S ribosomal RNA. The chain is Small ribosomal subunit protein bS6 from Geotalea uraniireducens (strain Rf4) (Geobacter uraniireducens).